Reading from the N-terminus, the 212-residue chain is ER lumen protein-retaining receptor 2 (212 aa).

Over 1–4 (MNIF) the chain is Lumenal. The helical transmembrane segment at 5–24 (RLTGDLSHLAAIIILLLKIW) threads the bilayer. Residues 25-32 (KSRSCAGI) lie on the Cytoplasmic side of the membrane. A helical transmembrane segment spans residues 33-52 (SGKSQLLFALVFTTRYLDLF). Residues 47–48 (RY) form an interaction with the K-D-E-L motif on target proteins region. The Lumenal portion of the chain corresponds to 53–58 (TSFISL). A helical membrane pass occupies residues 59 to 79 (YNTSMKLIYIACSYATVYLIY). The Cytoplasmic segment spans residues 80-92 (MKFKATYDGNHDT). Residues 93-110 (FRVEFLIVPVGGLSFLVN) traverse the membrane as a helical segment. Residues 111–116 (HDFSPL) lie on the Lumenal side of the membrane. A helical transmembrane segment spans residues 117-135 (EILWTFSIYLESVAILPQL). Residues 136–149 (FMISKTGEAETITT) lie on the Cytoplasmic side of the membrane. A helical transmembrane segment spans residues 150–168 (HYLFFLGLYRALYLVNWIW). Residues 159–169 (RALYLVNWIWR) are interaction with the K-D-E-L motif on target proteins. The Lumenal portion of the chain corresponds to 169 to 178 (RYYFEGFFDL). The helical transmembrane segment at 179–199 (IAVVAGVVQTVLYCDFFYLYV) threads the bilayer. Over 200 to 212 (TKVLKGKKLSLPA) the chain is Cytoplasmic. Positions 204-207 (KGKK) are important for recycling of cargo proteins with the sequence motif K-D-E-L from the Golgi to the endoplasmic reticulum.

Belongs to the ERD2 family.

The protein resides in the endoplasmic reticulum membrane. It is found in the golgi apparatus membrane. The protein localises to the cytoplasmic vesicle. It localises to the COPI-coated vesicle membrane. Its function is as follows. Membrane receptor that binds the K-D-E-L sequence motif in the C-terminal part of endoplasmic reticulum resident proteins and maintains their localization in that compartment by participating to their vesicle-mediated recycling back from the Golgi. Binding is pH dependent, and is optimal at pH 5-5.4. In Gallus gallus (Chicken), this protein is ER lumen protein-retaining receptor 2 (KDELR2).